The following is a 272-amino-acid chain: Shikimate dehydrogenase (NADP(+)) (272 aa).

Shikimate contacts are provided by residues 14–16 and T61; that span reads SKS. Catalysis depends on K65, which acts as the Proton acceptor. E77 lines the NADP(+) pocket. Shikimate-binding residues include N86 and D102. Residues 126 to 130, 149 to 154, and M213 each bind NADP(+); these read GAGGA and NRTASR. Shikimate is bound at residue Y215. G237 contributes to the NADP(+) binding site.

The protein belongs to the shikimate dehydrogenase family. In terms of assembly, homodimer.

It catalyses the reaction shikimate + NADP(+) = 3-dehydroshikimate + NADPH + H(+). It functions in the pathway metabolic intermediate biosynthesis; chorismate biosynthesis; chorismate from D-erythrose 4-phosphate and phosphoenolpyruvate: step 4/7. Its function is as follows. Involved in the biosynthesis of the chorismate, which leads to the biosynthesis of aromatic amino acids. Catalyzes the reversible NADPH linked reduction of 3-dehydroshikimate (DHSA) to yield shikimate (SA). The sequence is that of Shikimate dehydrogenase (NADP(+)) from Salmonella schwarzengrund (strain CVM19633).